The sequence spans 491 residues: Protein DETOXIFICATION 56 (491 aa).

Transmembrane regions (helical) follow at residues 39 to 59 (LPLV…SVFL), 72 to 92 (LGFS…SAAM), 111 to 131 (TLFM…FLWL), 154 to 174 (LLYL…KAYL), 181 to 201 (LPIM…NIVL), 212 to 232 (MAVW…VIVV), 261 to 281 (GPCC…VLLT), 291 to 311 (VSIL…MLSL), 336 to 356 (YTTL…MIAF), 379 to 399 (MLIM…GEIV), 409 to 429 (MYAN…TLAF), and 438 to 458 (FLIG…IFIA).

The protein belongs to the multi antimicrobial extrusion (MATE) (TC 2.A.66.1) family. As to quaternary structure, interacts with BCA4 and HT1. As to expression, preferentially expressed in guard cells.

It localises to the cell membrane. In terms of biological role, could function as a HCO(3)(-) -sensing component in the CO(2) signaling pathway in guard cells. Acts as an upstream repressor of HT1. Plays a role in stomatal response to CO(2). The sequence is that of Protein DETOXIFICATION 56 from Arabidopsis thaliana (Mouse-ear cress).